A 94-amino-acid polypeptide reads, in one-letter code: Small ribosomal subunit protein bS16 (94 aa).

It belongs to the bacterial ribosomal protein bS16 family.

This Thermosipho africanus (strain TCF52B) protein is Small ribosomal subunit protein bS16.